We begin with the raw amino-acid sequence, 93 residues long: Small ribosomal subunit protein bS6 (93 aa).

It belongs to the bacterial ribosomal protein bS6 family.

Its function is as follows. Binds together with bS18 to 16S ribosomal RNA. In Phytoplasma australiense, this protein is Small ribosomal subunit protein bS6.